The sequence spans 40 residues: Spodomicin (40 aa).

3 disulfides stabilise this stretch: cysteine 6-cysteine 20, cysteine 10-cysteine 32, and cysteine 21-cysteine 39.

As to quaternary structure, monomer. In terms of processing, contains three disulfide bonds. As to expression, hemolymph.

Its subcellular location is the secreted. Fungicide. The polypeptide is Spodomicin (Spodoptera littoralis (Egyptian cotton leafworm)).